We begin with the raw amino-acid sequence, 510 residues long: 2,3-bisphosphoglycerate-independent phosphoglycerate mutase (510 aa).

The Mn(2+) site is built by Asp-12 and Ser-62. The Phosphoserine intermediate role is filled by Ser-62. Substrate-binding positions include His-123, 153 to 154 (RD), Arg-185, Arg-191, 260 to 263 (RPDR), and Lys-335. Positions 402, 406, 443, 444, and 461 each coordinate Mn(2+).

It belongs to the BPG-independent phosphoglycerate mutase family. In terms of assembly, monomer. The cofactor is Mn(2+).

It carries out the reaction (2R)-2-phosphoglycerate = (2R)-3-phosphoglycerate. It participates in carbohydrate degradation; glycolysis; pyruvate from D-glyceraldehyde 3-phosphate: step 3/5. Its function is as follows. Catalyzes the interconversion of 2-phosphoglycerate and 3-phosphoglycerate. This is 2,3-bisphosphoglycerate-independent phosphoglycerate mutase from Listeria monocytogenes serotype 4b (strain F2365).